A 331-amino-acid polypeptide reads, in one-letter code: NADH-quinone oxidoreductase subunit H (331 aa).

The next 8 helical transmembrane spans lie at Ala7 to Ile27, Met81 to Val101, Ile114 to Gly134, Ile154 to Phe174, Val187 to Val207, Phe238 to Phe258, Trp271 to Ile291, and Val310 to Ala330.

This sequence belongs to the complex I subunit 1 family. NDH-1 is composed of 13 different subunits. Subunits NuoA, H, J, K, L, M, N constitute the membrane sector of the complex.

The protein resides in the cell inner membrane. The catalysed reaction is a quinone + NADH + 5 H(+)(in) = a quinol + NAD(+) + 4 H(+)(out). In terms of biological role, NDH-1 shuttles electrons from NADH, via FMN and iron-sulfur (Fe-S) centers, to quinones in the respiratory chain. The immediate electron acceptor for the enzyme in this species is believed to be ubiquinone. Couples the redox reaction to proton translocation (for every two electrons transferred, four hydrogen ions are translocated across the cytoplasmic membrane), and thus conserves the redox energy in a proton gradient. This subunit may bind ubiquinone. This is NADH-quinone oxidoreductase subunit H from Pseudomonas paraeruginosa (strain DSM 24068 / PA7) (Pseudomonas aeruginosa (strain PA7)).